The chain runs to 624 residues: Ceramide transfer protein (624 aa).

A compositionally biased stretch (polar residues) spans 1–11 (MSDNQSWNSSG). The tract at residues 1 to 24 (MSDNQSWNSSGSEEDPETESGPPV) is disordered. The PH domain maps to 23–117 (PVERCGVLSK…WIDAIEQHKT (95 aa)). Residue S126 is modified to Phosphoserine. S132 is subject to Phosphoserine; by PKD. S135 is modified (phosphoserine). Residues 263 to 303 (IELMVKREDSWQKRLDKETEKKRRTEEAYKNAMTELKKKSH) are a coiled coil. Residue S315 is modified to Phosphoserine. An FFAT motif is present at residues 321-327 (EFFDAVE). At Y372 the chain carries Phosphotyrosine. Residues S373, S377, and S380 each carry the phosphoserine modification. The START domain occupies 389 to 618 (DVHRFSSQVE…FTSYVQEKTA (230 aa)). 4 residues coordinate an N-acylsphing-4-enine: E472, Q493, N530, and Y579.

As to quaternary structure, interacts with VAPA and VAPB. Interaction with VAPB is less efficient than with VAPA. Interacts (via FFAT motif) with the MOSPD2 (via MSP domain). In terms of processing, phosphorylation on Ser-132 decreases the affinity toward phosphatidylinositol 4-phosphate at Golgi membranes and reduces ceramide transfer activity. Inactivated by hyperphosphorylation of serine residues by CSNK1G2/CK1 that triggers dissociation from the Golgi complex, thus down-regulating ER-to-Golgi transport of ceramide and sphingomyelin synthesis.

The protein localises to the cytoplasm. Its subcellular location is the golgi apparatus. It localises to the endoplasmic reticulum. It catalyses the reaction N-hexadecanoylsphing-4-enine(in) = N-hexadecanoylsphing-4-enine(out). In terms of biological role, shelters ceramides and diacylglycerol lipids inside its START domain and mediates the intracellular trafficking of ceramides and diacylglycerol lipids in a non-vesicular manner. In Pongo abelii (Sumatran orangutan), this protein is Ceramide transfer protein (CERT1).